The chain runs to 341 residues: Phosphatidylserine decarboxylase proenzyme (341 aa).

Active-site charge relay system; for autoendoproteolytic cleavage activity residues include Asp-90, His-147, and Ser-254. The active-site Schiff-base intermediate with substrate; via pyruvic acid; for decarboxylase activity is the Ser-254. Ser-254 carries the post-translational modification Pyruvic acid (Ser); by autocatalysis. Positions 287–341 are disordered; that stretch reads RQDEQTPVVFPEGTELEENDAAQPPVAATSEPVQADGQNPAAEVSGQTGHKPDAP.

The protein belongs to the phosphatidylserine decarboxylase family. PSD-B subfamily. Prokaryotic type I sub-subfamily. As to quaternary structure, heterodimer of a large membrane-associated beta subunit and a small pyruvoyl-containing alpha subunit. Requires pyruvate as cofactor. In terms of processing, is synthesized initially as an inactive proenzyme. Formation of the active enzyme involves a self-maturation process in which the active site pyruvoyl group is generated from an internal serine residue via an autocatalytic post-translational modification. Two non-identical subunits are generated from the proenzyme in this reaction, and the pyruvate is formed at the N-terminus of the alpha chain, which is derived from the carboxyl end of the proenzyme. The autoendoproteolytic cleavage occurs by a canonical serine protease mechanism, in which the side chain hydroxyl group of the serine supplies its oxygen atom to form the C-terminus of the beta chain, while the remainder of the serine residue undergoes an oxidative deamination to produce ammonia and the pyruvoyl prosthetic group on the alpha chain. During this reaction, the Ser that is part of the protease active site of the proenzyme becomes the pyruvoyl prosthetic group, which constitutes an essential element of the active site of the mature decarboxylase.

It localises to the cell membrane. The catalysed reaction is a 1,2-diacyl-sn-glycero-3-phospho-L-serine + H(+) = a 1,2-diacyl-sn-glycero-3-phosphoethanolamine + CO2. It participates in phospholipid metabolism; phosphatidylethanolamine biosynthesis; phosphatidylethanolamine from CDP-diacylglycerol: step 2/2. Its function is as follows. Catalyzes the formation of phosphatidylethanolamine (PtdEtn) from phosphatidylserine (PtdSer). The chain is Phosphatidylserine decarboxylase proenzyme from Pectobacterium atrosepticum (strain SCRI 1043 / ATCC BAA-672) (Erwinia carotovora subsp. atroseptica).